A 372-amino-acid chain; its full sequence is General transcription factor IIH subunit 3 (372 aa).

The disordered stretch occupies residues 40-78 (ISGMNDDNDSSSRYNGSTTIGNNNNNNNNNNSNNNNNVN). The segment covering 50–60 (SSRYNGSTTIG) has biased composition (polar residues). A compositionally biased stretch (low complexity) spans 61–78 (NNNNNNNNNNSNNNNNVN). Residues 323–340 (CSVCLSIFCGHSSSCSTC) form a C4-type zinc finger.

It belongs to the TFB4 family. Component of the 7-subunit TFIIH core complex composed of XPB/repB, XPD/repD, gtf2h1, gtf2h2, gtf2h3, gtf2h4 and gtf2h5, which is active in NER. The core complex associates with the 3-subunit CDK-activating kinase (CAK) module composed of cycH/cyclin H, cdk7 and mnat1 to form the 10-subunit holoenzyme (holo-TFIIH) active in transcription.

It localises to the nucleus. Its function is as follows. Component of the general transcription and DNA repair factor IIH (TFIIH) core complex, which is involved in general and transcription-coupled nucleotide excision repair (NER) of damaged DNA and, when complexed to CAK, in RNA transcription by RNA polymerase II. In NER, TFIIH acts by opening DNA around the lesion to allow the excision of the damaged oligonucleotide and its replacement by a new DNA fragment. In transcription, TFIIH has an essential role in transcription initiation. When the pre-initiation complex (PIC) has been established, TFIIH is required for promoter opening and promoter escape. Phosphorylation of the C-terminal tail (CTD) of the largest subunit of RNA polymerase II by the kinase module CAK controls the initiation of transcription. This is General transcription factor IIH subunit 3 (gtf2h3) from Dictyostelium discoideum (Social amoeba).